We begin with the raw amino-acid sequence, 101 residues long: NADH-quinone oxidoreductase subunit K (101 aa).

3 helical membrane-spanning segments follow: residues 4 to 24, 29 to 49, and 61 to 81; these read VYDYLVLGVILFGLSLVGIML, IILLLVCVELMLLAVNTNFIA, and VFVFFILTVAAAEAAIGLAIV.

Belongs to the complex I subunit 4L family. As to quaternary structure, NDH-1 is composed of 14 different subunits. Subunits NuoA, H, J, K, L, M, N constitute the membrane sector of the complex.

The protein resides in the cell inner membrane. It catalyses the reaction a quinone + NADH + 5 H(+)(in) = a quinol + NAD(+) + 4 H(+)(out). NDH-1 shuttles electrons from NADH, via FMN and iron-sulfur (Fe-S) centers, to quinones in the respiratory chain. The immediate electron acceptor for the enzyme in this species is believed to be ubiquinone. Couples the redox reaction to proton translocation (for every two electrons transferred, four hydrogen ions are translocated across the cytoplasmic membrane), and thus conserves the redox energy in a proton gradient. The chain is NADH-quinone oxidoreductase subunit K from Legionella pneumophila (strain Paris).